The chain runs to 219 residues: Sugar transporter SWEET1 (219 aa).

A run of 7 helical transmembrane segments spans residues 3–23 (FLQL…TTGL), 38–58 (VQFL…YYGL), 63–83 (GTVI…IATY), 98–118 (LLMV…ISPG), 125–145 (LGLT…ADLL), 156–176 (LSFS…LYGL), and 189–209 (PGIF…AVIP). Positions 5–90 (QLLSCACIIF…ATYCHYTKEK (86 aa)) constitute a MtN3/slv 1 domain. The 81-residue stretch at 124–204 (QLGLTCSVFT…LIRFFLFWWF (81 aa)) folds into the MtN3/slv 2 domain.

This sequence belongs to the SWEET sugar transporter family.

It is found in the golgi apparatus membrane. The protein resides in the cell membrane. Functionally, mediates sugar transport across membranes. The protein is Sugar transporter SWEET1 (slc50a1) of Danio rerio (Zebrafish).